Consider the following 711-residue polypeptide: Mitochondrial intermediate peptidase (711 aa).

Residues 1–33 (MLLAAGARYARRLCGRGAAAALQGRTGRSCARD) constitute a mitochondrion transit peptide. At Lys-124 the chain carries N6-acetyllysine. His-493 provides a ligand contact to Zn(2+). Glu-494 is an active-site residue. Zn(2+)-binding residues include His-497 and His-500.

Belongs to the peptidase M3 family. Monomer. The cofactor is Zn(2+).

Its subcellular location is the mitochondrion matrix. The enzyme catalyses Release of an N-terminal octapeptide as second stage of processing of some proteins imported into the mitochondrion.. Its activity is regulated as follows. Activity is divalent cation-dependent. It is stimulated by manganese, magnesium or calcium ions and reversibly inhibited by zinc, cobalt and iron. In terms of biological role, cleaves proteins, imported into the mitochondrion, to their mature size. In Mus musculus (Mouse), this protein is Mitochondrial intermediate peptidase (Mipep).